Reading from the N-terminus, the 117-residue chain is MKVLLWIGYVLSFGLLYLYLVKRAKRAALQLNNKLVESHTIPFAVRDFIAACGGRTNFVSLRTSPTQLIVSFAKPELVQIAALQKLGIKGINKSQNQYRFVLGNFVNQLKQQIENER.

Residues 1–21 traverse the membrane as a helical segment; sequence MKVLLWIGYVLSFGLLYLYLV. Positions 42–117 constitute a PTS EIIB type-1 domain; it reads PFAVRDFIAA…QLKQQIENER (76 aa).

The protein resides in the membrane. In terms of biological role, the phosphoenolpyruvate-dependent sugar phosphotransferase system (PTS), a major carbohydrate active -transport system, catalyzes the phosphorylation of incoming sugar substrates concomitant with their translocation across the cell membrane. This chain is Putative phosphotransferase enzyme IIB component MPN_268, found in Mycoplasma pneumoniae (strain ATCC 29342 / M129 / Subtype 1) (Mycoplasmoides pneumoniae).